The chain runs to 298 residues: Probable 2-(5''-triphosphoribosyl)-3'-dephosphocoenzyme-A synthase 2 (298 aa).

This sequence belongs to the CitG/MdcB family.

It carries out the reaction 3'-dephospho-CoA + ATP = 2'-(5''-triphospho-alpha-D-ribosyl)-3'-dephospho-CoA + adenine. The polypeptide is Probable 2-(5''-triphosphoribosyl)-3'-dephosphocoenzyme-A synthase 2 (Salmonella typhi).